The following is a 355-amino-acid chain: Uroporphyrinogen decarboxylase (355 aa).

Substrate-binding positions include 27–31, D77, Y154, T209, and H327; that span reads RQAGR.

This sequence belongs to the uroporphyrinogen decarboxylase family. As to quaternary structure, homodimer.

The protein resides in the cytoplasm. It catalyses the reaction uroporphyrinogen III + 4 H(+) = coproporphyrinogen III + 4 CO2. It participates in porphyrin-containing compound metabolism; protoporphyrin-IX biosynthesis; coproporphyrinogen-III from 5-aminolevulinate: step 4/4. In terms of biological role, catalyzes the decarboxylation of four acetate groups of uroporphyrinogen-III to yield coproporphyrinogen-III. The sequence is that of Uroporphyrinogen decarboxylase from Aeromonas salmonicida (strain A449).